Here is a 393-residue protein sequence, read N- to C-terminus: Methylthioribose kinase (393 aa).

ATP is bound by residues N38, K53, and 107–109 (EDL). D225 provides a ligand contact to substrate. Position 242 to 244 (242 to 244 (DPE)) interacts with ATP. R332 contacts substrate.

It belongs to the methylthioribose kinase family. As to quaternary structure, homodimer.

The enzyme catalyses 5-(methylsulfanyl)-D-ribose + ATP = 5-(methylsulfanyl)-alpha-D-ribose 1-phosphate + ADP + H(+). It functions in the pathway amino-acid biosynthesis; L-methionine biosynthesis via salvage pathway; S-methyl-5-thio-alpha-D-ribose 1-phosphate from S-methyl-5'-thioadenosine (hydrolase route): step 2/2. In terms of biological role, catalyzes the phosphorylation of methylthioribose into methylthioribose-1-phosphate. In Bacillus cereus (strain ZK / E33L), this protein is Methylthioribose kinase.